A 251-amino-acid chain; its full sequence is uncharacterized protein (251 aa).

The first 18 residues, 1–18 (MRILIILSIILCSLSIRA), serve as a signal peptide directing secretion.

This sequence belongs to the MlaA family.

This is an uncharacterized protein from Rickettsia conorii (strain ATCC VR-613 / Malish 7).